The following is a 384-amino-acid chain: tRNA-specific 2-thiouridylase MnmA (384 aa).

ATP is bound by residues 9-16 and Met-35; that span reads GMSGGVDS. The interval 95–97 is interaction with target base in tRNA; sequence NPD. Cys-100 (nucleophile) is an active-site residue. Cys-100 and Cys-196 form a disulfide bridge. ATP is bound at residue Gly-124. An interaction with tRNA region spans residues 146 to 148; that stretch reads KDQ. Residue Cys-196 is the Cysteine persulfide intermediate of the active site. The interval 308–309 is interaction with tRNA; sequence RY.

Belongs to the MnmA/TRMU family.

The protein resides in the cytoplasm. It catalyses the reaction S-sulfanyl-L-cysteinyl-[protein] + uridine(34) in tRNA + AH2 + ATP = 2-thiouridine(34) in tRNA + L-cysteinyl-[protein] + A + AMP + diphosphate + H(+). Functionally, catalyzes the 2-thiolation of uridine at the wobble position (U34) of tRNA, leading to the formation of s(2)U34. The polypeptide is tRNA-specific 2-thiouridylase MnmA (Paraburkholderia phymatum (strain DSM 17167 / CIP 108236 / LMG 21445 / STM815) (Burkholderia phymatum)).